A 927-amino-acid polypeptide reads, in one-letter code: MDGFAGSLDDSVSAASTSDVQDRLSALELRVQQQEDEITVLKAALADVLRRLAISEDQVATVRKAVPSKGPATLREALSMSCITNGGAGTRKPSHASSVAKKDTLSSAAKSVKRSSTLEKSHNSWDASEESRNKLMRAASTSKLTSKVSKATDKHKDIVISPEGEYIKMFMRGRPITMFIPSDVENYDDVRTELPPEKLKLEWVFGYRGRDCRANVYLLPTGEIVYFIASVVVLFNYEERTQRHYLGHTDCVKCIAVHPDKIRIATGQIAGVDKDGRPLQPHVRVWDSVSLSTLQVIGLGTFERGVGCLAFSKADSGVHLSVIDDSNEHMLTVWDWQKKSKIAEIKTTNEVVLAVEFHPTDAGTIVTCGKSHIFFWTWSGNSLARKQGIFGKYEKPKFVQCLAFLANGDVLAGDSGGIMLIWSKTNVESTASKGAKVLGVYQISKQIKAHDGSVFTLCQMRNGMLLTGGGKDRKVIMWDHDLNPEREIEVPDQYGTIRAVAEGKGDQFLVGTSRNFILRGTFNDGFQVEVQGHTDELWGLATHPFKDLLLTCAQDKQVCLWNSVDHSLEWTRVLDEPGHCADFHPTGTVVAIGTHSGRWFVLDAETRDLVSIHTDGNEQLSVMRYSVDGALLAVGSHDNFIYLYNVSENGRKYSRYGKCTGHSSYITHLDWSPDNQYIMSNSGDYEILYWDIPSGCKLIRNRSECKDINWTTYTCVLGFQVFGVWPEGSDGTDINALVRSHNRKVIALADDFCKVHLFQYPCSKPKAPSHKYSAHSSHVTNVSFTHNDGHLISTGGKDMSIMQWRLIEKVSHSQNDNIAESSSAVNSPVVSEKVLQPDTPTTLPQAVNKATEVEQTPAESMAPPEDALELEAQQPQDLDDVQSGKSSPLPEEANGQEPSDEVIEEPANSQIVDAQDENQDDDDAPLS.

The interval 1–189 is microtubule-binding; it reads MDGFAGSLDD…IPSDVENYDD (189 aa). A coiled-coil region spans residues 14-63; the sequence is AASTSDVQDRLSALELRVQQQEDEITVLKAALADVLRRLAISEDQVATVR. The segment at 85–132 is disordered; it reads NGGAGTRKPSHASSVAKKDTLSSAAKSVKRSSTLEKSHNSWDASEESR. A compositionally biased stretch (basic and acidic residues) spans 116-132; sequence STLEKSHNSWDASEESR. 13 WD repeats span residues 199–237, 241–288, 296–336, 343–378, 385–424, 442–480, 485–521, 524–563, 567–604, 610–646, 653–692, 702–760, and 767–806; these read LKLE…LFNY, TQRH…VWDS, VIGL…VWDW, AEIK…FWTW, RKQG…IWSK, QISK…MWDH, EREI…LRGT, DGFQ…LWNS, SLEW…VLDA, VSIH…LYNV, YSRY…YWDI, RSEC…LFQY, and APSH…QWRL. Residues 815–829 are compositionally biased toward polar residues; that stretch reads NDNIAESSSAVNSPV. A disordered region spans residues 815 to 927; that stretch reads NDNIAESSSA…NQDDDDAPLS (113 aa). Acidic residues predominate over residues 914–927; it reads AQDENQDDDDAPLS.

The protein belongs to the WD repeat EMAP family. In terms of assembly, homotrimer; self-association is mediated by the N-terminal coiled coil.

The protein localises to the cytoplasm. Its subcellular location is the cytoskeleton. It is found in the spindle. The protein resides in the microtubule organizing center. It localises to the midbody. Functionally, essential for the formation and stability of microtubules (MTs). Required for the organization of the mitotic spindle and for the proper attachment of kinetochores to MTs. Promotes the recruitment of NUDC to the mitotic spindle for mitotic progression. This chain is Echinoderm microtubule-associated protein-like 4 (eml4), found in Xenopus laevis (African clawed frog).